Reading from the N-terminus, the 306-residue chain is MAGRYAPSPSGDLHFGNLRTALLAWVFARHDGRDFLMRVEDIDEQRSTMESAERQLSDLSMLGLDWDGDVLYQSSRHDAYRAAIAQLDTYECYCSRRDIQEASRAPHAKPGMYPGTCRELTPGQRAERRAGLAAQNRHPAIRLRAEVDSFTVVDRLRGEVTGDVDDFILLRGGQEPGWAYNLAVVVDDAFQGVDQVVRGDDLLDSVARQAYLCTLLGAAIPEYVHVPLVLNARGQRLAKRDGAVTLREMLVDAPLTHIISSLAASLGYEGISTPVELLAVFDPGALSLEPFIFTGLNGSATDRMDK.

Residues 4–8 (RYAPS) and Glu-40 contribute to the L-glutamate site. Positions 7–17 (PSPSGDLHFGN) match the 'HIGH' region motif. Residues Cys-92, Cys-94, Tyr-113, and Cys-117 each coordinate Zn(2+). The L-glutamate site is built by Tyr-180 and Arg-198. Positions 236–240 (RLAKR) match the 'KMSKS' region motif. Residue Lys-239 coordinates ATP.

It belongs to the class-I aminoacyl-tRNA synthetase family. GluQ subfamily. Requires Zn(2+) as cofactor.

Catalyzes the tRNA-independent activation of glutamate in presence of ATP and the subsequent transfer of glutamate onto a tRNA(Asp). Glutamate is transferred on the 2-amino-5-(4,5-dihydroxy-2-cyclopenten-1-yl) moiety of the queuosine in the wobble position of the QUC anticodon. This is Glutamyl-Q tRNA(Asp) synthetase from Corynebacterium efficiens (strain DSM 44549 / YS-314 / AJ 12310 / JCM 11189 / NBRC 100395).